A 1240-amino-acid polypeptide reads, in one-letter code: ATP-dependent helicase/nuclease subunit A (1240 aa).

The UvrD-like helicase ATP-binding domain maps to 12–485 (SQWTDDQWKA…IDLAKNFRSR (474 aa)). 33 to 40 (AAAGSGKT) serves as a coordination point for ATP. The UvrD-like helicase C-terminal domain maps to 497-804 (KQIMGEEVGE…RIMTIHKSKG (308 aa)).

Belongs to the helicase family. AddA subfamily. As to quaternary structure, heterodimer of AddA and AddB/RexB. Mg(2+) serves as cofactor.

The catalysed reaction is Couples ATP hydrolysis with the unwinding of duplex DNA by translocating in the 3'-5' direction.. The enzyme catalyses ATP + H2O = ADP + phosphate + H(+). In terms of biological role, the heterodimer acts as both an ATP-dependent DNA helicase and an ATP-dependent, dual-direction single-stranded exonuclease. Recognizes the chi site generating a DNA molecule suitable for the initiation of homologous recombination. The AddA nuclease domain is required for chi fragment generation; this subunit has the helicase and 3' -&gt; 5' nuclease activities. The sequence is that of ATP-dependent helicase/nuclease subunit A from Bacillus cereus (strain AH820).